The primary structure comprises 135 residues: Holo-[acyl-carrier-protein] synthase (135 aa).

Positions 8 and 58 each coordinate Mg(2+).

It belongs to the P-Pant transferase superfamily. AcpS family. The cofactor is Mg(2+).

It localises to the cytoplasm. The catalysed reaction is apo-[ACP] + CoA = holo-[ACP] + adenosine 3',5'-bisphosphate + H(+). Its function is as follows. Transfers the 4'-phosphopantetheine moiety from coenzyme A to a Ser of acyl-carrier-protein. In Leuconostoc citreum (strain KM20), this protein is Holo-[acyl-carrier-protein] synthase.